Consider the following 317-residue polypeptide: MAFRIPFAQSFWQEYLSGQEANLPRLPEVEQVTETVMRILGGNPGRMQLQGTNTYLVGTGKFRILIDTGQGEASWIEALTKQLEANGLEISHVLLTHWHGDHTGGVPDLITYNPELSSRVYKNTPDLGQQAIHDGQKFHVEGATIRAVFTPGHAFDHMCFLLEEENALFTGDNVLGHGYSVVEDLGTYMTSLTRMADLNCALGYPAHGTRIEDLPAKMKEYIQHKESRMRQVLAALERSRARMTATGGGRRAGALTFPELINSMYGGIPDEIEQALTPFLSQVLWKLAEDRKVGFEGEPSQRRWFAVGPPAATAVRL.

The Zn(2+) site is built by His97, His99, Asp101, and His102. Residue Asp101 is the Proton donor/acceptor of the active site.

The protein belongs to the metallo-beta-lactamase superfamily. It depends on Zn(2+) as a cofactor.

It carries out the reaction 3-(2,4-dioxopentyl)-2,3,6,8,9-pentahydroxy-1-oxo-1,2,3,4-tetrahydroanthracene-2-carboxyl-[ACP] = 2-acetyl-3,4a,8,10,11,12a-hexahydroxy-1,4,4a,5,12,12a-hexahydrotetracene-1,12-dione + holo-[ACP] + H(+). Its pathway is secondary metabolite biosynthesis. Functionally, lactamase-like protein; part of the gene cluster that mediates the biosynthesis of the linear tetracyclic TAN-1612 neuropeptide Y receptor antagonist. The decaketide backbone of TAN-1612 is synthesized by the non-reducing polyketide synthase adaA via condensation of one acetyl-CoA starter unit with 9 malonyl-CoA units. The FAD-dependent monooxygenase adaC then performs hydroxylation at C2 while the polaketide chain is still attached to the NRPKS adaA. The alpha-hydroxylation step at C2 appears to be crucial for the following C18-C1 Claisen cyclization and release of the C9-hydroxyl version of TAN-1612 from the NRPKS adaA, two steps performed by the lactamase-like protein adaB. Finally, the O-methyltransferase adaD performs the C9 O-methylation to complete the biosynthesis of TAN-1612. This is Lactamase-like protein adaB from Aspergillus niger (strain ATCC MYA-4892 / CBS 513.88 / FGSC A1513).